The primary structure comprises 244 residues: Small ribosomal subunit protein uS3 (244 aa).

In terms of domain architecture, KH type-2 spans 39-107 (MRKFVMSELK…ETHLNIVEVR (69 aa)). Residues 214-244 (ASERRALEGDAQGPASRERDRGDRRRERDNA) are disordered. Residues 229–244 (SRERDRGDRRRERDNA) are compositionally biased toward basic and acidic residues.

Belongs to the universal ribosomal protein uS3 family. As to quaternary structure, part of the 30S ribosomal subunit. Forms a tight complex with proteins S10 and S14.

In terms of biological role, binds the lower part of the 30S subunit head. Binds mRNA in the 70S ribosome, positioning it for translation. This Rhizobium etli (strain CIAT 652) protein is Small ribosomal subunit protein uS3.